The sequence spans 613 residues: Phosphomethylpyrimidine synthase (613 aa).

Residues Asn-215, Met-244, Tyr-273, His-309, 329–331, 370–373, and Glu-409 each bind substrate; these read SRG and DGLR. His-413 serves as a coordination point for Zn(2+). Tyr-436 lines the substrate pocket. His-477 is a binding site for Zn(2+). Positions 557, 560, and 565 each coordinate [4Fe-4S] cluster.

It belongs to the ThiC family. As to quaternary structure, homodimer. It depends on [4Fe-4S] cluster as a cofactor.

The catalysed reaction is 5-amino-1-(5-phospho-beta-D-ribosyl)imidazole + S-adenosyl-L-methionine = 4-amino-2-methyl-5-(phosphooxymethyl)pyrimidine + CO + 5'-deoxyadenosine + formate + L-methionine + 3 H(+). It participates in cofactor biosynthesis; thiamine diphosphate biosynthesis. Its function is as follows. Catalyzes the synthesis of the hydroxymethylpyrimidine phosphate (HMP-P) moiety of thiamine from aminoimidazole ribotide (AIR) in a radical S-adenosyl-L-methionine (SAM)-dependent reaction. This Paramagnetospirillum magneticum (strain ATCC 700264 / AMB-1) (Magnetospirillum magneticum) protein is Phosphomethylpyrimidine synthase.